Reading from the N-terminus, the 182-residue chain is Plasmolipin (182 aa).

Residues 1-35 (MAEFPSKVSTRTSSPAQGVGASVSALRPDLGFVRS) are Cytoplasmic-facing. S9 carries the phosphoserine modification. An MARVEL domain is found at 32–166 (FVRSALGVLA…SAFFSFQAWR (135 aa)). A helical transmembrane segment spans residues 36–56 (ALGVLALLQLALGLLVWALIA). Topologically, residues 57 to 68 (DTPYHLYPAYGW) are extracellular. A helical transmembrane segment spans residues 69 to 89 (VMFVAVFLWLVTIVFFIIYLF). Residues 90–99 (QLHMKLYMVP) lie on the Cytoplasmic side of the membrane. A helical transmembrane segment spans residues 100–120 (WPLVLLIFFVAATVLYITAFI). Topologically, residues 121 to 141 (ACAAAVDLTSLRGSRPYNQRS) are extracellular. Residues 142–162 (AASFFACLVMIAYGVSAFFSF) traverse the membrane as a helical segment. Over 163 to 182 (QAWRGVGSNAATSQMAGGYS) the chain is Cytoplasmic.

The protein belongs to the MAL family. As to quaternary structure, forms oligomers. Phosphorylated.

Its subcellular location is the membrane. It is found in the cell membrane. The protein resides in the myelin membrane. It localises to the apical cell membrane. In terms of biological role, main component of the myelin sheath that plays an important role in myelin membrane biogenesis and myelination. Plays an essential function in apical endocytosis. Regulates epithelial development through the regulation of apical endocytosis. Part of the intracellular machinery that mediates basolateral-to-apical transport of ICAM-1, an essential adhesion receptor in epithelial cells, from the subapical compartment in hepatic epithelial cells. This chain is Plasmolipin (Pllp), found in Mus musculus (Mouse).